The following is a 152-amino-acid chain: Proteolipid protein 2 (152 aa).

In terms of domain architecture, MARVEL spans 19-138 (FSRTKKGILL…DAYITFPLKQ (120 aa)). A run of 4 helical transmembrane segments spans residues 25 to 45 (GILLFAEIILCLVILICFSAS), 48 to 68 (SAYSSLSVIEMICAAVLLVFY), 85 to 105 (DFFRSLIATILYLITSIVVLV), and 112 to 132 (RVVAGILGLLATLLFGYDAYI).

It localises to the membrane. Functionally, may play a role in cell differentiation in the intestinal epithelium. The protein is Proteolipid protein 2 (Plp2) of Mus musculus (Mouse).